The following is a 742-amino-acid chain: ATP-dependent RNA helicase DBP7 (742 aa).

Residues 45–100 (GKTVSRKRKANTTGDEGIIPGRGENSIKKLHKESSYSSEEQEKYKGRNAHNTQGRT) are disordered. The short motif at 143–172 (DQFASLGVSSLLVSHLEQKMRIKKPTSIQK) is the Q motif element. Positions 178–372 (IIGNAGKNDF…NVALKDYKLI (195 aa)) constitute a Helicase ATP-binding domain. 191–198 (AQTGSGKT) contacts ATP. The DEGD box signature appears at 307 to 310 (DEGD). The 201-residue stretch at 405–605 (TLAATLNNIT…ILMPAFKDVN (201 aa)) folds into the Helicase C-terminal domain. Residues 701-726 (AMGLQSSKDGNSEKKPTKENSKNKMF) form a disordered region. The segment covering 710-722 (GNSEKKPTKENSK) has biased composition (basic and acidic residues).

Belongs to the DEAD box helicase family. DDX31/DBP7 subfamily.

The protein localises to the nucleus. It is found in the nucleolus. The enzyme catalyses ATP + H2O = ADP + phosphate + H(+). Functionally, ATP-binding RNA helicase involved in the biogenesis of 60S ribosomal subunits and is required for the normal formation of 25S and 5.8S rRNAs. This is ATP-dependent RNA helicase DBP7 (DBP7) from Saccharomyces cerevisiae (strain ATCC 204508 / S288c) (Baker's yeast).